The chain runs to 266 residues: MICOS complex subunit MIC27 (266 aa).

The N-terminal 27 residues, 1–27, are a transit peptide targeting the mitochondrion; the sequence is MAAIRMGKLTTMPAGLIYASVSVHAAK. Residues 28–110 lie on the Mitochondrial intermembrane side of the membrane; that stretch reads EEESKKQLVK…YVYMKNPPRD (83 aa). A helical membrane pass occupies residues 111–129; the sequence is FLPKMGVITVSGLAGLVSA. Residues 130–137 lie on the Mitochondrial matrix side of the membrane; sequence RKGSKFKK. A helical membrane pass occupies residues 138–155; that stretch reads ITYPLGLATLGATVCYPV. At 156–266 the chain is on the mitochondrial intermembrane side; it reads QSVIIAKVTA…NVTNSGVLRI (111 aa). Phosphoserine is present on Ser-204.

The protein belongs to the apolipoprotein O/MICOS complex subunit Mic27 family. As to quaternary structure, component of the mitochondrial contact site and cristae organizing system (MICOS) complex, composed of at least MICOS10/MIC10, CHCHD3/MIC19, CHCHD6/MIC25, APOOL/MIC27, IMMT/MIC60, APOO/MIC23/MIC26 and MICOS13/MIC13. This complex was also known under the names MINOS or MitOS complex. The MICOS complex associates with mitochondrial outer membrane proteins SAMM50, MTX1 and MTX2 (together described as components of the mitochondrial outer membrane sorting assembly machinery (SAM) complex) and DNAJC11, mitochondrial inner membrane protein TMEM11 and with HSPA9. The MICOS and SAM complexes together with DNAJC11 are part of a large protein complex spanning both membranes termed the mitochondrial intermembrane space bridging (MIB) complex. Interacts with MICOS10/MIC10, IMMT/MIC60 and APOO/MIC23/MIC26.

It is found in the mitochondrion inner membrane. The protein resides in the mitochondrion. Its function is as follows. Component of the MICOS complex, a large protein complex of the mitochondrial inner membrane that plays crucial roles in the maintenance of crista junctions, inner membrane architecture, and formation of contact sites to the outer membrane. Specifically binds to cardiolipin (in vitro) but not to the precursor lipid phosphatidylglycerol. Plays a crucial role in crista junction formation and mitochondrial function. The protein is MICOS complex subunit MIC27 (APOOL) of Pongo abelii (Sumatran orangutan).